Here is a 564-residue protein sequence, read N- to C-terminus: Arrestin domain-containing protein E (564 aa).

Residues 74 to 146 (SQQPQSSQPS…NTSNGFSPPN (73 aa)) are compositionally biased toward low complexity. Disordered regions lie at residues 74–150 (SQQP…LNKN) and 245–286 (ASQP…SFPS). The segment covering 250–259 (PQQPQQPQPQ) has biased composition (pro residues). The segment covering 260–269 (QPQQQQFQQQ) has biased composition (low complexity). Polar residues predominate over residues 270–285 (SYNNNNSTQSMLSSFP). One can recognise an LIM zinc-binding domain in the interval 348-413 (DKCAACDALL…PMCFESTTGL (66 aa)).

The chain is Arrestin domain-containing protein E (adcE) from Dictyostelium discoideum (Social amoeba).